The primary structure comprises 37 residues: Large ribosomal subunit protein bL36 (37 aa).

This sequence belongs to the bacterial ribosomal protein bL36 family.

This is Large ribosomal subunit protein bL36 from Shewanella baltica (strain OS223).